A 373-amino-acid chain; its full sequence is Anhydro-N-acetylmuramic acid kinase (373 aa).

Residue 12 to 19 (GTSLDGVD) coordinates ATP.

Belongs to the anhydro-N-acetylmuramic acid kinase family.

The catalysed reaction is 1,6-anhydro-N-acetyl-beta-muramate + ATP + H2O = N-acetyl-D-muramate 6-phosphate + ADP + H(+). Its pathway is amino-sugar metabolism; 1,6-anhydro-N-acetylmuramate degradation. It functions in the pathway cell wall biogenesis; peptidoglycan recycling. Its function is as follows. Catalyzes the specific phosphorylation of 1,6-anhydro-N-acetylmuramic acid (anhMurNAc) with the simultaneous cleavage of the 1,6-anhydro ring, generating MurNAc-6-P. Is required for the utilization of anhMurNAc either imported from the medium or derived from its own cell wall murein, and thus plays a role in cell wall recycling. The polypeptide is Anhydro-N-acetylmuramic acid kinase (Salmonella dublin (strain CT_02021853)).